The following is a 170-amino-acid chain: Anaphase-promoting complex subunit SWM1 (170 aa).

2 stretches are compositionally biased toward basic and acidic residues: residues 48-67 and 132-141; these read NTRT…RNSN and GANEPRKETI. Disordered regions lie at residues 48–81 and 122–141; these read NTRT…MTSE and LNGG…KETI.

The protein belongs to the APC13 family. The APC/C is composed of at least 13 subunits that stay tightly associated throughout the cell cycle: APC1, APC2, APC4, APC5, APC9, APC11, CDC16, CDC23, CDC26, CDC27, DOC1, MND2 and SWM1. SWM1 interacts directly with CDC23 and APC5, and is required to tether APC9, CDC16, CDC26 and CDC27 to the complex.

It functions in the pathway protein modification; protein ubiquitination. Functionally, component of the anaphase promoting complex/cyclosome (APC/C), a cell cycle-regulated E3 ubiquitin-protein ligase complex that controls progression through mitosis and the G1 phase of the cell cycle. The APC/C is thought to confer substrate specificity and, in the presence of ubiquitin-conjugating E2 enzymes, it catalyzes the formation of protein-ubiquitin conjugates that are subsequently degraded by the 26S proteasome. In early mitosis, the APC/C is activated by CDC20 and targets securin PDS1, the B-type cyclin CLB5, and other anaphase inhibitory proteins for proteolysis, thereby triggering the separation of sister chromatids at the metaphase-to-anaphase transition. In late mitosis and in G1, degradation of CLB5 allows activation of the APC/C by CDH1, which is needed to destroy CDC20 and the B-type cyclin CLB2 to allow exit from mitosis and creating the low CDK state necessary for cytokinesis and for reforming prereplicative complexes in G1 prior to another round of replication. SWM1 is required for APC/C activity in meiosis. The chain is Anaphase-promoting complex subunit SWM1 (SWM1) from Saccharomyces cerevisiae (strain ATCC 204508 / S288c) (Baker's yeast).